Here is a 38-residue protein sequence, read N- to C-terminus: Tyrosinase inhibitor (38 aa).

3 disulfides stabilise this stretch: Cys-11-Cys-25, Cys-18-Cys-29, and Cys-24-Cys-36. Tyr-32 carries the 3',4'-dihydroxyphenylalanine modification.

In terms of assembly, monomer. Contains L-DOPA (3',4'-dihydroxyphenylalanine).

The protein localises to the secreted. Potent reversible, competitive inhibitor of tyrosinase (phenol oxidase) in the nanomolar range. The polypeptide is Tyrosinase inhibitor (Musca domestica (House fly)).